Reading from the N-terminus, the 139-residue chain is MKKGTVLHSGISSVISRLGHTDTVVVCDAGLPIPSTTERIDLALTQGVPGFLQVVDVVTQEMQVEAAILAEEIKQHNPQLHETLLGQIERLQQHQGNTITVRYVSHEQFKLKTADSQAVIRSGECSPYANIILCAGVTF.

The active-site Proton donor is histidine 20. Substrate-binding positions include aspartate 28, histidine 106, and 128–130 (YAN).

This sequence belongs to the RbsD / FucU family. RbsD subfamily. As to quaternary structure, homodecamer.

The protein resides in the cytoplasm. It catalyses the reaction beta-D-ribopyranose = beta-D-ribofuranose. It participates in carbohydrate metabolism; D-ribose degradation; D-ribose 5-phosphate from beta-D-ribopyranose: step 1/2. Catalyzes the interconversion of beta-pyran and beta-furan forms of D-ribose. The protein is D-ribose pyranase of Cronobacter sakazakii (strain ATCC BAA-894) (Enterobacter sakazakii).